The sequence spans 198 residues: ATP-dependent Clp protease proteolytic subunit (198 aa).

Ser-98 (nucleophile) is an active-site residue. The active site involves His-123.

Belongs to the peptidase S14 family. As to quaternary structure, fourteen ClpP subunits assemble into 2 heptameric rings which stack back to back to give a disk-like structure with a central cavity, resembling the structure of eukaryotic proteasomes.

It localises to the cytoplasm. The enzyme catalyses Hydrolysis of proteins to small peptides in the presence of ATP and magnesium. alpha-casein is the usual test substrate. In the absence of ATP, only oligopeptides shorter than five residues are hydrolyzed (such as succinyl-Leu-Tyr-|-NHMec, and Leu-Tyr-Leu-|-Tyr-Trp, in which cleavage of the -Tyr-|-Leu- and -Tyr-|-Trp bonds also occurs).. Functionally, cleaves peptides in various proteins in a process that requires ATP hydrolysis. Has a chymotrypsin-like activity. Plays a major role in the degradation of misfolded proteins. The sequence is that of ATP-dependent Clp protease proteolytic subunit from Bacillus pumilus (strain SAFR-032).